The primary structure comprises 163 residues: Photosystem II extrinsic protein V (163 aa).

The signal sequence occupies residues 1–26 (MLKRSSWLAALLGLLTVVSTSTHTYA). Residues cysteine 63, cysteine 66, histidine 67, and histidine 118 each contribute to the heme c site.

The protein belongs to the cytochrome c family. PsbV subfamily. In terms of assembly, PSII is composed of 1 copy each of membrane proteins PsbA, PsbB, PsbC, PsbD, PsbE, PsbF, PsbH, PsbI, PsbJ, PsbK, PsbL, PsbM, PsbT, PsbY, PsbZ, Psb30/Ycf12, at least 3 peripheral proteins of the oxygen-evolving complex and a large number of cofactors. It forms dimeric complexes. The extrinsic subunits in red algae are PsbO (OEC33), PsbQ', cytochrome c-550 and PsbU. It depends on heme c as a cofactor.

The protein localises to the plastid. The protein resides in the chloroplast thylakoid membrane. In terms of biological role, one of the extrinsic, lumenal subunits of photosystem II (PSII). PSII is a light-driven water plastoquinone oxidoreductase, using light energy to abstract electrons from H(2)O, generating a proton gradient subsequently used for ATP formation. The extrinsic proteins stabilize the structure of photosystem II oxygen-evolving complex (OEC), the ion environment of oxygen evolution and protect the OEC against heat-induced inactivation. This Pyropia yezoensis (Susabi-nori) protein is Photosystem II extrinsic protein V.